The sequence spans 144 residues: Large ribosomal subunit protein uL15 (144 aa).

Positions 20–49 are disordered; it reads GRGIGSGLGKTGGRGHKGQKSRSGGFHKVG. The span at 21 to 31 shows a compositional bias: gly residues; the sequence is RGIGSGLGKTG.

Belongs to the universal ribosomal protein uL15 family. Part of the 50S ribosomal subunit.

Its function is as follows. Binds to the 23S rRNA. The protein is Large ribosomal subunit protein uL15 of Neisseria meningitidis serogroup C (strain 053442).